The primary structure comprises 333 residues: Porphobilinogen deaminase (333 aa).

S-(dipyrrolylmethanemethyl)cysteine is present on C255.

Belongs to the HMBS family. Monomer. Dipyrromethane serves as cofactor.

The enzyme catalyses 4 porphobilinogen + H2O = hydroxymethylbilane + 4 NH4(+). Its pathway is porphyrin-containing compound metabolism; protoporphyrin-IX biosynthesis; coproporphyrinogen-III from 5-aminolevulinate: step 2/4. Tetrapolymerization of the monopyrrole PBG into the hydroxymethylbilane pre-uroporphyrinogen in several discrete steps. This chain is Porphobilinogen deaminase, found in Burkholderia vietnamiensis (strain G4 / LMG 22486) (Burkholderia cepacia (strain R1808)).